A 483-amino-acid chain; its full sequence is Aspartyl/glutamyl-tRNA(Asn/Gln) amidotransferase subunit B (483 aa).

This sequence belongs to the GatB/GatE family. GatB subfamily. As to quaternary structure, heterotrimer of A, B and C subunits.

It carries out the reaction L-glutamyl-tRNA(Gln) + L-glutamine + ATP + H2O = L-glutaminyl-tRNA(Gln) + L-glutamate + ADP + phosphate + H(+). The catalysed reaction is L-aspartyl-tRNA(Asn) + L-glutamine + ATP + H2O = L-asparaginyl-tRNA(Asn) + L-glutamate + ADP + phosphate + 2 H(+). Allows the formation of correctly charged Asn-tRNA(Asn) or Gln-tRNA(Gln) through the transamidation of misacylated Asp-tRNA(Asn) or Glu-tRNA(Gln) in organisms which lack either or both of asparaginyl-tRNA or glutaminyl-tRNA synthetases. The reaction takes place in the presence of glutamine and ATP through an activated phospho-Asp-tRNA(Asn) or phospho-Glu-tRNA(Gln). This is Aspartyl/glutamyl-tRNA(Asn/Gln) amidotransferase subunit B from Lachnospira eligens (strain ATCC 27750 / DSM 3376 / VPI C15-48 / C15-B4) (Eubacterium eligens).